A 350-amino-acid chain; its full sequence is Autophagy-related protein 3 (350 aa).

The segment at 85 to 166 (NFAGDAGLEE…EEDDEAIIRD (82 aa)) is flexible region. The disordered stretch occupies residues 97–171 (VDDGDEFKGS…AIIRDTDASG (75 aa)). Over residues 102–113 (EFKGSKGDDDGW) the composition is skewed to basic and acidic residues. Residues 146-161 (DDDDDIPDMEDEEDDE) show a composition bias toward acidic residues. The Glycyl thioester intermediate role is filled by Cys244. A handle region region spans residues 248-326 (PVMKTLLDRA…DQEVAIRVDQ (79 aa)). N6-acetyllysine is present on residues Lys262 and Lys267.

The protein belongs to the ATG3 family. Monomer. Interacts with ATG8 through an intermediate thioester bond through the C-terminal Gly of ATG8. Also interacts with the 40 amino acid C-terminal region of the E1-like ATG7 enzyme. Also interacts with the ATG12-ATG5 conjugate. Interacts with HAT1. Post-translationally, acetylated by HAT1 at Lys-262 and Lys-267, which affects the interaction with ATG8 and prevents autophagy during both appressorium development and nutrient starvation.

The protein resides in the preautophagosomal structure. Its subcellular location is the cytoplasm. E2 conjugating enzyme required for the cytoplasm to vacuole transport (Cvt) and autophagy. Required for selective autophagic degradation of the nucleus (nucleophagy) as well as for mitophagy which contributes to regulate mitochondrial quantity and quality by eliminating the mitochondria to a basal level to fulfill cellular energy requirements and preventing excess ROS production. Responsible for the E2-like covalent binding of phosphatidylethanolamine to the C-terminal Gly of ATG8. The ATG12-ATG5 conjugate plays a role of an E3 and promotes the transfer of ATG8 from ATG3 to phosphatidylethanolamine (PE). This step is required for the membrane association of ATG8. The formation of the ATG8-phosphatidylethanolamine conjugate is essential for autophagy and for the cytoplasm to vacuole transport (Cvt). The ATG8-PE conjugate mediates tethering between adjacent membranes and stimulates membrane hemifusion, leading to expansion of the autophagosomal membrane during autophagy. Plays a role in appressorium formation and pathogenicity. This is Autophagy-related protein 3 from Pyricularia oryzae (strain 70-15 / ATCC MYA-4617 / FGSC 8958) (Rice blast fungus).